A 391-amino-acid polypeptide reads, in one-letter code: Phosphoprotein (391 aa).

Phosphothreonine occurs at positions 10 and 16. The segment covering 54–65 (QKNIQHPTASHQ) has biased composition (polar residues). Disordered regions lie at residues 54-98 (QKNI…EPLF) and 148-184 (PVTE…KERS). Serine 69 bears the Phosphoserine mark. Phosphothreonine occurs at positions 91, 150, and 165. A Phosphoserine modification is found at serine 188. Residues 216 to 279 (ISANEIMDLL…MATVKIMDPG (64 aa)) form a multimerization region. Positions 218-245 (ANEIMDLLRGMDARLQHLEQKVDKVLAQ) form a coiled coil. Position 250 is a phosphothreonine (threonine 250). Serine 257 carries the phosphoserine modification. Threonine 258 and threonine 282 each carry phosphothreonine. Serine 292 and serine 294 each carry phosphoserine. Phosphothreonine is present on threonine 298. Phosphoserine occurs at positions 301 and 374. The interval 343–391 (AGRKVMITKMITDCVANPQMKQAFEQRLAKASTEDALNDIKRDIIRSAI) is interaction with the nucleoprotein. Threonine 375 carries the post-translational modification Phosphothreonine.

It belongs to the rubulavirus/avulavirus P protein family. In terms of assembly, homotetramer. Interacts (via multimerization domain) with polymerase L; this interaction forms the polymerase L-P complex. Interacts (via N-terminus) with N0 (via Ncore); this interaction allows P to chaperon N0 to avoid N polymerization before encapsidation. Interacts (via C-terminus) with N-RNA template; this interaction positions the polymerase on the template for both transcription and replication. Interacts with host RPS6KB1 kinase; this interaction may play a role in the viral replication and transcription.

Essential cofactor of the RNA polymerase L that plays a central role in the transcription and replication by forming the polymerase complex with RNA polymerase L and recruiting L to the genomic N-RNA template for RNA synthesis. Also plays a central role in the encapsidation of nascent RNA chains by forming the encapsidation complex with the nucleocapsid protein N (N-P complex). Acts as a chaperone for newly synthesized free N protein, so-called N0, allowing encapsidation of nascent RNA chains during replication. The nucleoprotein protein N prevents excessive phosphorylation of P, which leads to down-regulation of viral transcription/ replication. Participates, together with N, in the formation of viral factories (viroplasms), which are large inclusions in the host cytoplasm where replication takes place. The chain is Phosphoprotein from Mumps virus (strain Enders) (MuV).